Reading from the N-terminus, the 332-residue chain is Glycine betaine-binding periplasmic protein OusX (332 aa).

The signal sequence occupies residues 1–21; the sequence is MRNISMATLALTTVLSTGLFA.

As to quaternary structure, the complex is composed of two ATP-binding proteins (OusV), two transmembrane proteins (OusW) and a solute-binding protein (OusX).

The protein localises to the periplasm. In terms of biological role, part of the OusB ABC transporter complex involved in glycine betaine and choline uptake. Binds glycine betaine. The polypeptide is Glycine betaine-binding periplasmic protein OusX (Dickeya dadantii (strain 3937) (Erwinia chrysanthemi (strain 3937))).